The primary structure comprises 526 residues: Bifunctional purine biosynthesis protein PurH (526 aa).

The region spanning 1–149 (MLHSLPIRRA…KNHEAVTVVV (149 aa)) is the MGS-like domain.

Belongs to the PurH family.

The enzyme catalyses (6R)-10-formyltetrahydrofolate + 5-amino-1-(5-phospho-beta-D-ribosyl)imidazole-4-carboxamide = 5-formamido-1-(5-phospho-D-ribosyl)imidazole-4-carboxamide + (6S)-5,6,7,8-tetrahydrofolate. It carries out the reaction IMP + H2O = 5-formamido-1-(5-phospho-D-ribosyl)imidazole-4-carboxamide. The protein operates within purine metabolism; IMP biosynthesis via de novo pathway; 5-formamido-1-(5-phospho-D-ribosyl)imidazole-4-carboxamide from 5-amino-1-(5-phospho-D-ribosyl)imidazole-4-carboxamide (10-formyl THF route): step 1/1. It functions in the pathway purine metabolism; IMP biosynthesis via de novo pathway; IMP from 5-formamido-1-(5-phospho-D-ribosyl)imidazole-4-carboxamide: step 1/1. In Rhodospirillum rubrum (strain ATCC 11170 / ATH 1.1.1 / DSM 467 / LMG 4362 / NCIMB 8255 / S1), this protein is Bifunctional purine biosynthesis protein PurH.